A 776-amino-acid chain; its full sequence is Cullin-1 (776 aa).

Position 63 is an omega-N-methylarginine (R63). The Cullin neddylation domain occupies 706-766 (DRKLLIQAAI…IEKEYLERVD (61 aa)). K720 is covalently cross-linked (Glycyl lysine isopeptide (Lys-Gly) (interchain with G-Cter in NEDD8)).

The protein belongs to the cullin family. In terms of assembly, component of multiple Cul1-RING E3 ubiquitin-protein ligase complexes commonly known as SCF (SKP1-CUL1-F-box) complexes, consisting of CUL1, SKP1, RBX1 and a variable F-box domain-containing protein as substrate-specific subunit. Component of the SCF(FBXW11) complex containing FBXW11. Component of the SCF(SKP2) complex containing SKP2, in which it interacts directly with SKP1, SKP2 and RBX1. Component of the SCF(FBXW2) complex containing FBXW2. Component of the SCF(FBXO32) complex containing FBXO32. Component of the probable SCF(FBXO7) complex containing FBXO7. Component of the SCF(FBXO10) complex containing FBXO10. Component of the SCF(FBXO11) complex containing FBXO11. Component of the SCF(FBXO25) complex containing FBXO25. Component of the SCF(FBXO33) complex containing FBXO33. Component of the probable SCF(FBXO4) complex containing FBXO4. Component of the SCF(FBXO44) complex, composed of SKP1, CUL1 and FBXO44. Component of the SCF(BTRC) complex, composed of SKP1, CUL1 and BTRC. This complex binds phosphorylated NFKBIA. Part of a SCF complex consisting of CUL1, RBX1, SKP1 and FBXO2. Component of a SCF(SKP2)-like complex containing CUL1, SKP1, TRIM21 and SKP2. Component of the SCF(FBXO17) complex, composed of SKP1, CUL1 and FBXO17. Component of the SCF(FBXO27) complex, composed of SKP1, CUL1 and FBXO27. Component of the SCF(CCNF) complex consisting of CUL1, RBX1, SKP1 and CCNF. Interacts with CCNF. Component of the SCF(FBXL3) complex composed of CUL1, SKP1, RBX1 and FBXL3. Component of the SCF(FBXL21) complex composed of CUL1, SKP1, RBX1 and FBXL21. Component of the SCF(FBXO9) composed of CUL1, SKP1, RBX1 and FBXO9. Component of the SCF(FBXW7) composed of CUL1, SKP1, RBX1 and FBXW7. Component of the SCF(FBXO31) complex composed of CUL1, SKP1, RBX1 and FBXO31. Interacts with CHEK2; mediates CHEK2 ubiquitination and regulates its function. Part of a complex with TIP120A/CAND1 and RBX1. The unneddylated form interacts with TIP120A/CAND1 and the interaction mediates the exchange of the F-box substrate-specific subunit. Can self-associate. Interacts with FBXW8. Interacts with RNF7. Interacts with TRIM21. Interacts with COPS2. Interacts with DCUN1D1 and UBE2M. Interacts with DCUN1D3. Interacts with DCUN1D4. Identified in a complex with RBX1 and GLMN. Interacts with CEP68 as part of the SCF(FBXW11) complex; the interaction is probably mediated by FBXW11 and the complex also contains CDK5RAP2 and PCNT. Interacts (when neddylated) with ARIH1; leading to activate the E3 ligase activity of ARIH1. Interacts with COPS9. Interacts with UBXN1. Interacts with KAT7, probably as part of an SCF complex; the interaction mediates KAT7 ubiquitination. Interacts with NOTCH2. Part of a complex that contains DCUN1D5, CUL1 and RBX1; this interaction is bridged by CUL1. Interacts (unneddylated form) with DCUN1D1, DCUN1D2, DCUN1D3, DCUN1D4 and DCUN1D5; these interactions promote the cullin neddylation. Interacts (via the C-terminal domain) with CUL7; the interaction seems to be mediated by FBXW8; it is likely specific to FBXW8, but not other F-box proteins. Interacts with UBR2, as part of SCF(BTRC) complex; the interaction mediates 'Lys-48'-linked ubiquitination of UBR2 and is regulated by DUSP22 in the T-cell receptor signaling pathway. (Microbial infection) Interacts with murine cytomegalovirus M48. Neddylated; which enhances the ubiquitination activity of SCF. Neddylation prevents binding of the inhibitor CAND1. Neddylation leads to structural rearrangment in the complex that allows interaction between the E2 ubiquitin-conjugating enzyme and the acceptor ubiquitin. Deneddylated via its interaction with the COP9 signalosome (CSN) complex. In terms of processing, (Microbial infection) Deneddylated by murine cytomegalovirus M48 leading to a S-phase-like environment that is required for efficient replication of the viral genome. Embryo fibroblasts and embryo preadipocytes.

Its pathway is protein modification; protein ubiquitination. Its function is as follows. Core component of multiple cullin-RING-based SCF (SKP1-CUL1-F-box protein) E3 ubiquitin-protein ligase complexes, which mediate the ubiquitination of proteins involved in cell cycle progression, signal transduction and transcription. SCF complexes and ARIH1 collaborate in tandem to mediate ubiquitination of target proteins. In the SCF complex, serves as a rigid scaffold that organizes the SKP1-F-box protein and RBX1 subunits. May contribute to catalysis through positioning of the substrate and the ubiquitin-conjugating enzyme. The E3 ubiquitin-protein ligase activity of the complex is dependent on the neddylation of the cullin subunit and exchange of the substrate recognition component is mediated by TIP120A/CAND1. The functional specificity of the SCF complex depends on the F-box protein as substrate recognition component. SCF(BTRC) and SCF(FBXW11) direct ubiquitination of CTNNB1 and participate in Wnt signaling. SCF(FBXW11) directs ubiquitination of phosphorylated NFKBIA. SCF(BTRC) directs ubiquitination of NFKBIB, NFKBIE, ATF4, SMAD3, SMAD4, CDC25A, FBXO5 and probably NFKB2. SCF(BTRC) and/or SCF(FBXW11) direct ubiquitination of CEP68. SCF(SKP2) directs ubiquitination of phosphorylated CDKN1B/p27kip and is involved in regulation of G1/S transition. SCF(SKP2) directs ubiquitination of ORC1, CDT1, RBL2, ELF4, CDKN1A, RAG2, FOXO1A, and probably MYC and TAL1. SCF(FBXW7) directs ubiquitination of cyclin E, NOTCH1 released notch intracellular domain (NICD), and probably PSEN1. SCF(FBXW2) directs ubiquitination of GCM1. SCF(FBXO32) directs ubiquitination of MYOD1. SCF(FBXO7) directs ubiquitination of BIRC2 and DLGAP5. SCF(FBXO33) directs ubiquitination of YBX1. SCF(FBXO1) directs ubiquitination of BCL6 and DTL but does not seem to direct ubiquitination of TP53. SCF(BTRC) mediates the ubiquitination of NFKBIA at 'Lys-21' and 'Lys-22'; the degradation frees the associated NFKB1-RELA dimer to translocate into the nucleus and to activate transcription. SCF(CCNF) directs ubiquitination of CCP110. SCF(FBXL3) and SCF(FBXL21) direct ubiquitination of CRY1 and CRY2. SCF(FBXO9) directs ubiquitination of TTI1 and TELO2. SCF(FBXO10) directs ubiquitination of BCL2. Neddylated CUL1-RBX1 ubiquitinates p53/TP53 recruited by Cul7-RING(FBXW8) complex. SCF(BTRC) directs 'Lys-48'-linked ubiquitination of UBR2 in the T-cell receptor signaling pathway. The SCF(FBXO31) protein ligase complex specifically mediates the ubiquitination of proteins amidated at their C-terminus in response to oxidative stress. The polypeptide is Cullin-1 (Cul1) (Mus musculus (Mouse)).